A 339-amino-acid polypeptide reads, in one-letter code: MKVREITEELEYKLLSPYAAKSRESRGRAREEEKCDIRTDFQRDRDRIIHSKAFRRLSHKTQVFISPEGDHYRTRLTHTLEVAQIARTIARALRLNEDLTEAIALGHDLGHTPFGHSGEEVLNKLLKGGFRHSEQSIRVVEVLENDGKGLNLTWEVKDGILNHSTGGKPSTLEGQVVQISDKIAYINHDIDDAIRGRVLKPEDLPKDLIAILGDKHGKRIDTMVRDVIYNSMGKPEVSMSKEIYEATYQLRAFLFEKVYIGSKAKRDEEKAKRVVEQLFYYFYDNVDKMPKEFVRLAEIYGRERAVADYIAGMTDKYALLKYKEIFLPSPWFEQNIFDL.

The 112-residue stretch at 75 to 186 (RLTHTLEVAQ…VQISDKIAYI (112 aa)) folds into the HD domain.

The protein belongs to the dGTPase family. Type 2 subfamily.

In Caldanaerobacter subterraneus subsp. tengcongensis (strain DSM 15242 / JCM 11007 / NBRC 100824 / MB4) (Thermoanaerobacter tengcongensis), this protein is Deoxyguanosinetriphosphate triphosphohydrolase-like protein.